Reading from the N-terminus, the 172-residue chain is Putative phosphoesterase BAMEG_3349 (172 aa).

His34 acts as the Proton donor in catalysis. 2 short sequence motifs (HXTX) span residues 34–37 (HITL) and 115–118 (HLTI). Catalysis depends on His115, which acts as the Proton acceptor.

The protein belongs to the 2H phosphoesterase superfamily. YjcG family.

The sequence is that of Putative phosphoesterase BAMEG_3349 from Bacillus anthracis (strain CDC 684 / NRRL 3495).